Reading from the N-terminus, the 266-residue chain is 4-hydroxy-tetrahydrodipicolinate reductase (266 aa).

10-15 (GPRGRM) is a binding site for NAD(+). Lys-38 lines the NADP(+) pocket. NAD(+) is bound by residues 99 to 101 (GTT) and 125 to 128 (APNF). Residue His-155 is the Proton donor/acceptor of the active site. His-156 lines the (S)-2,3,4,5-tetrahydrodipicolinate pocket. Lys-159 (proton donor) is an active-site residue. 165–166 (GT) is a binding site for (S)-2,3,4,5-tetrahydrodipicolinate.

This sequence belongs to the DapB family.

Its subcellular location is the cytoplasm. It catalyses the reaction (S)-2,3,4,5-tetrahydrodipicolinate + NAD(+) + H2O = (2S,4S)-4-hydroxy-2,3,4,5-tetrahydrodipicolinate + NADH + H(+). It carries out the reaction (S)-2,3,4,5-tetrahydrodipicolinate + NADP(+) + H2O = (2S,4S)-4-hydroxy-2,3,4,5-tetrahydrodipicolinate + NADPH + H(+). The protein operates within amino-acid biosynthesis; L-lysine biosynthesis via DAP pathway; (S)-tetrahydrodipicolinate from L-aspartate: step 4/4. In terms of biological role, catalyzes the conversion of 4-hydroxy-tetrahydrodipicolinate (HTPA) to tetrahydrodipicolinate. This is 4-hydroxy-tetrahydrodipicolinate reductase from Bacillus mycoides (strain KBAB4) (Bacillus weihenstephanensis).